Here is a 295-residue protein sequence, read N- to C-terminus: Glycine N-acyltransferase-like protein Keg1 (295 aa).

Position 41 is an N6-acetyllysine; alternate (K41). K41 carries the N6-succinyllysine; alternate modification. K43 is subject to N6-acetyllysine. K48 is subject to N6-acetyllysine; alternate. K48 carries the N6-succinyllysine; alternate modification. An N6-acetyllysine mark is found at K80 and K83. N6-acetyllysine; alternate occurs at positions 124, 128, and 140. N6-succinyllysine; alternate occurs at positions 124, 128, and 140. Position 150 is an N6-acetyllysine (K150). K255 carries the post-translational modification N6-acetyllysine; alternate. K255 carries the N6-succinyllysine; alternate modification.

This sequence belongs to the glycine N-acyltransferase family. Binds to microtubules.

The protein localises to the cytoplasm. The protein resides in the cytoskeleton. It is found in the microtubule organizing center. It localises to the centrosome. It carries out the reaction an acyl-CoA + glycine = an N-acylglycine + CoA + H(+). Its function is as follows. Acyltransferase which transfers the acyl group to the N-terminus of glycine. Can conjugate a multitude of substrates to form a variety of N-acylglycines. The polypeptide is Glycine N-acyltransferase-like protein Keg1 (Keg1) (Mus musculus (Mouse)).